The following is a 131-amino-acid chain: Profilin-5 (131 aa).

Residues Cys13 and Cys115 are joined by a disulfide bond. The Involved in PIP2 interaction signature appears at 81–97; it reads AVIRGKKGAGGITIKKT. A Phosphothreonine modification is found at Thr111.

This sequence belongs to the profilin family. Occurs in many kinds of cells as a complex with monomeric actin in a 1:1 ratio. Phosphorylated by MAP kinases.

The protein localises to the cytoplasm. The protein resides in the cytoskeleton. Binds to actin and affects the structure of the cytoskeleton. At high concentrations, profilin prevents the polymerization of actin, whereas it enhances it at low concentrations. This Olea europaea (Common olive) protein is Profilin-5.